A 295-amino-acid polypeptide reads, in one-letter code: Pyridoxal 5'-phosphate synthase subunit PdxS (295 aa).

Asp23 contacts D-ribose 5-phosphate. The active-site Schiff-base intermediate with D-ribose 5-phosphate is the Lys80. Position 152 (Gly152) interacts with D-ribose 5-phosphate. Arg164 contributes to the D-glyceraldehyde 3-phosphate binding site. D-ribose 5-phosphate is bound by residues Gly213 and 234–235 (GS).

The protein belongs to the PdxS/SNZ family. In terms of assembly, in the presence of PdxT, forms a dodecamer of heterodimers.

The catalysed reaction is aldehydo-D-ribose 5-phosphate + D-glyceraldehyde 3-phosphate + L-glutamine = pyridoxal 5'-phosphate + L-glutamate + phosphate + 3 H2O + H(+). It functions in the pathway cofactor biosynthesis; pyridoxal 5'-phosphate biosynthesis. Catalyzes the formation of pyridoxal 5'-phosphate from ribose 5-phosphate (RBP), glyceraldehyde 3-phosphate (G3P) and ammonia. The ammonia is provided by the PdxT subunit. Can also use ribulose 5-phosphate and dihydroxyacetone phosphate as substrates, resulting from enzyme-catalyzed isomerization of RBP and G3P, respectively. This chain is Pyridoxal 5'-phosphate synthase subunit PdxS, found in Methanosphaera stadtmanae (strain ATCC 43021 / DSM 3091 / JCM 11832 / MCB-3).